A 194-amino-acid polypeptide reads, in one-letter code: Small ribosomal subunit protein uS4 (194 aa).

At lysine 66 the chain carries N6-acetyllysine. A Glycyl lysine isopeptide (Lys-Gly) (interchain with G-Cter in SUMO2) cross-link involves residue lysine 93. The S4 RNA-binding domain occupies 108-182 (RRLQTQVFKL…VKRKNAKKGQ (75 aa)). The residue at position 116 (lysine 116) is an N6-acetyllysine. Residue lysine 139 forms a Glycyl lysine isopeptide (Lys-Gly) (interchain with G-Cter in SUMO2) linkage. Serine 153 is modified (phosphoserine). Lysine 155 bears the N6-acetyllysine mark. The interval 162 to 194 (RSPYGGGRPGRVKRKNAKKGQGGAGAGDDEEED) is disordered. Phosphoserine is present on serine 163.

The protein belongs to the universal ribosomal protein uS4 family. In terms of assembly, component of the small ribosomal subunit. Part of the small subunit (SSU) processome, composed of more than 70 proteins and the RNA chaperone small nucleolar RNA (snoRNA) U3.

The protein localises to the cytoplasm. Its subcellular location is the nucleus. The protein resides in the nucleolus. In terms of biological role, component of the small ribosomal subunit. The ribosome is a large ribonucleoprotein complex responsible for the synthesis of proteins in the cell. Part of the small subunit (SSU) processome, first precursor of the small eukaryotic ribosomal subunit. During the assembly of the SSU processome in the nucleolus, many ribosome biogenesis factors, an RNA chaperone and ribosomal proteins associate with the nascent pre-rRNA and work in concert to generate RNA folding, modifications, rearrangements and cleavage as well as targeted degradation of pre-ribosomal RNA by the RNA exosome. The protein is Small ribosomal subunit protein uS4 (RPS9) of Papio anubis (Olive baboon).